Here is a 307-residue protein sequence, read N- to C-terminus: Pseudouridine-5'-phosphate glycosidase (307 aa).

The Proton donor role is filled by Glu26. Residues Lys88 and Val108 each coordinate substrate. Asp140 provides a ligand contact to Mn(2+). Residue Ser142–Asp144 coordinates substrate. Lys161 functions as the Nucleophile in the catalytic mechanism.

This sequence belongs to the pseudouridine-5'-phosphate glycosidase family. In terms of assembly, homotrimer. The cofactor is Mn(2+).

The enzyme catalyses D-ribose 5-phosphate + uracil = psi-UMP + H2O. In terms of biological role, catalyzes the reversible cleavage of pseudouridine 5'-phosphate (PsiMP) to ribose 5-phosphate and uracil. Functions biologically in the cleavage direction, as part of a pseudouridine degradation pathway. The sequence is that of Pseudouridine-5'-phosphate glycosidase from Clostridium botulinum (strain Langeland / NCTC 10281 / Type F).